Reading from the N-terminus, the 368-residue chain is Ferredoxin--NADP reductase 2 (368 aa).

FAD contacts are provided by Asp-57, Gln-65, Tyr-70, Val-110, Phe-145, Asp-310, and Thr-351.

The protein belongs to the ferredoxin--NADP reductase type 2 family. As to quaternary structure, homodimer. It depends on FAD as a cofactor.

The enzyme catalyses 2 reduced [2Fe-2S]-[ferredoxin] + NADP(+) + H(+) = 2 oxidized [2Fe-2S]-[ferredoxin] + NADPH. The protein is Ferredoxin--NADP reductase 2 of Cupriavidus pinatubonensis (strain JMP 134 / LMG 1197) (Cupriavidus necator (strain JMP 134)).